Here is a 203-residue protein sequence, read N- to C-terminus: CASP-like protein 1B1 (203 aa).

Topologically, residues 1 to 24 are cytoplasmic; it reads MALVNAEKPEVGSSPSSLGPRNKS. A helical transmembrane segment spans residues 25 to 45; the sequence is WVLLMLRFVAFLATAAATIVM. Residues 46–76 are Extracellular-facing; it reads AANRETKTFVVATIGSTPIKATVTAKFQHTP. A helical transmembrane segment spans residues 77–97; sequence AFVFFVIANGMGSIHNLVMIA. Topologically, residues 98–114 are cytoplasmic; that stretch reads GDTFVRKFDYKGLRWVT. Residues 115 to 135 form a helical membrane-spanning segment; it reads VAILDMLTAALISGGVNAAVF. The Extracellular portion of the chain corresponds to 136–165; sequence MAELGKNGNSHAKWNKICDRFGSFCDHGGA. Residues 166-186 traverse the membrane as a helical segment; the sequence is AIIASFIGLLLMLVISIISII. Over 187–203 the chain is Cytoplasmic; sequence KLLKPKSPLVDSHVLAP.

The protein belongs to the Casparian strip membrane proteins (CASP) family. As to quaternary structure, homodimer and heterodimers.

The protein resides in the cell membrane. The protein is CASP-like protein 1B1 of Ricinus communis (Castor bean).